The following is a 312-amino-acid chain: Methionyl-tRNA formyltransferase (312 aa).

A (6S)-5,6,7,8-tetrahydrofolate-binding site is contributed by 109-112 (SLLP).

It belongs to the Fmt family.

The enzyme catalyses L-methionyl-tRNA(fMet) + (6R)-10-formyltetrahydrofolate = N-formyl-L-methionyl-tRNA(fMet) + (6S)-5,6,7,8-tetrahydrofolate + H(+). In terms of biological role, attaches a formyl group to the free amino group of methionyl-tRNA(fMet). The formyl group appears to play a dual role in the initiator identity of N-formylmethionyl-tRNA by promoting its recognition by IF2 and preventing the misappropriation of this tRNA by the elongation apparatus. This chain is Methionyl-tRNA formyltransferase, found in Listeria monocytogenes serotype 4b (strain CLIP80459).